Consider the following 201-residue polypeptide: L-rhamnose-binding lectin SML (201 aa).

Intrachain disulfides connect cysteine 10–cysteine 40, cysteine 20–cysteine 99, cysteine 54–cysteine 86, cysteine 67–cysteine 73, cysteine 108–cysteine 138, cysteine 117–cysteine 195, cysteine 152–cysteine 182, and cysteine 163–cysteine 169. 2 SUEL-type lectin domains span residues 18-100 (LSCD…YNCF) and 107-196 (TCEH…YVCQ). A glycan (N-linked (GlcNAc...) asparagine) is linked at asparagine 168.

As to quaternary structure, homodimer; non-covalently linked.

In terms of biological role, rhamnose-binding lectin. Also binds melibiose, raffinose, D-galactose, L-arabinose, D-fucose, maltose and D-glucose with decreasing affinity. Does not bind D-arabinose, L-fucose, lactose, xylose or 2-deoxy-D-galactose. Shows strong hemagglutinating activity against rabbit erythrocytes. This Scomberomorus niphonius (Japanese Spanish mackerel) protein is L-rhamnose-binding lectin SML.